The sequence spans 137 residues: Glutamyl-tRNA(Gln) amidotransferase subunit C, chloroplastic/mitochondrial (137 aa).

This sequence belongs to the GatC family. As to quaternary structure, subunit of the heterotrimeric GatCAB amidotransferase (AdT) complex, composed of A, B and C subunits.

The protein localises to the mitochondrion. Its subcellular location is the plastid. It localises to the chloroplast. The enzyme catalyses L-glutamyl-tRNA(Gln) + L-glutamine + ATP + H2O = L-glutaminyl-tRNA(Gln) + L-glutamate + ADP + phosphate + H(+). Its function is as follows. Allows the formation of correctly charged Gln-tRNA(Gln) through the transamidation of misacylated Glu-tRNA(Gln) in chloroplasts and mitochondria. The reaction takes place in the presence of glutamine and ATP through an activated gamma-phospho-Glu-tRNA(Gln). The sequence is that of Glutamyl-tRNA(Gln) amidotransferase subunit C, chloroplastic/mitochondrial from Vitis vinifera (Grape).